Consider the following 254-residue polypeptide: Photosystem II 22 kDa protein 2, chloroplastic (254 aa).

The transit peptide at 1–38 (MALQQSMAMPMMVVSGLGTAPRSSPMVQLQRMKKHLVV) directs the protein to the chloroplast. 2 repeat units span residues 42–148 (FKSR…FVDD) and 149–253 (ATGL…DNDD). 4 helical membrane-spanning segments follow: residues 86–106 (VAMLGFAASLLGEAVTGKGIL), 120–140 (AEPLLLFFILFTLLGAIGALG), 184–204 (LFVGRLAQLGIAFSLIGEIIT), and 219–239 (PINEIEPLLLFNILFFFFAAI).

Belongs to the ELIP/psbS family.

The protein localises to the plastid. It localises to the chloroplast thylakoid membrane. Functionally, involved in high light-mediated energy-dependent nonphotochemical quenching (NPQ, qE) and thermal dissipation (TD) thus regulating energy conversion in photosystem II and protecting from photoinhibition. Also seems to regulate quantum yield of electron transport in fluctuating light conditions. The polypeptide is Photosystem II 22 kDa protein 2, chloroplastic (Oryza sativa subsp. indica (Rice)).